The following is a 149-amino-acid chain: Alpha-crystallin A chain (149 aa).

Residues 41-149 (LFRTVLESGI…DTSYSERPIP (109 aa)) enclose the sHSP domain. Residues His-89, Glu-91, and His-96 each contribute to the Zn(2+) site.

Belongs to the small heat shock protein (HSP20) family. In terms of assembly, heteropolymer composed of three CRYAA and one CRYAB subunits. Inter-subunit bridging via zinc ions enhances stability, which is crucial as there is no protein turn over in the lens. Zinc coordination is achieved at least by His-89, Glu-91 and His-96. His-83 and Glu-85 come from the same molecule within the oligomer, while His-90 residue is provided by another molecule. Can also form homodimers and homotetramers (dimers of dimers) which serve as the building blocks of homooligomers.

The protein localises to the cytoplasm. It is found in the nucleus. Its function is as follows. Contributes to the transparency and refractive index of the lens. May act as a chaperone, preventing aggregation of various proteins under a wide range of stress conditions. This Trachemys scripta elegans (Red-eared slider turtle) protein is Alpha-crystallin A chain (CRYAA).